The chain runs to 306 residues: Large ribosomal subunit protein uL2m (306 aa).

A mitochondrion-targeting transit peptide spans 1–60; the sequence is MALCALTSALRSLSLASAAITARVPTLLPAAQIQSNVLLQLPPALVSPSYRPVHMSADRS.

The protein belongs to the universal ribosomal protein uL2 family. Component of the mitochondrial ribosome large subunit (39S) which comprises a 16S rRNA and about 50 distinct proteins.

The protein resides in the mitochondrion. This is Large ribosomal subunit protein uL2m (Mrpl2) from Mus musculus (Mouse).